The chain runs to 205 residues: Small ribosomal subunit protein uS5 (205 aa).

The region spanning 49–112 is the S5 DRBM domain; it reads LVDEVLCIDM…TNAKLNIVKV (64 aa).

This sequence belongs to the universal ribosomal protein uS5 family. Part of the 30S ribosomal subunit. Contacts protein S4.

Its function is as follows. With S4 and S12 plays an important role in translational accuracy. The sequence is that of Small ribosomal subunit protein uS5 from Methanocorpusculum labreanum (strain ATCC 43576 / DSM 4855 / Z).